A 140-amino-acid polypeptide reads, in one-letter code: Small ribosomal subunit protein uS12 (140 aa).

D102 is modified (3-methylthioaspartic acid).

This sequence belongs to the universal ribosomal protein uS12 family. In terms of assembly, part of the 30S ribosomal subunit. Contacts proteins S8 and S17. May interact with IF1 in the 30S initiation complex.

In terms of biological role, with S4 and S5 plays an important role in translational accuracy. Interacts with and stabilizes bases of the 16S rRNA that are involved in tRNA selection in the A site and with the mRNA backbone. Located at the interface of the 30S and 50S subunits, it traverses the body of the 30S subunit contacting proteins on the other side and probably holding the rRNA structure together. The combined cluster of proteins S8, S12 and S17 appears to hold together the shoulder and platform of the 30S subunit. The polypeptide is Small ribosomal subunit protein uS12 (Bacillus cytotoxicus (strain DSM 22905 / CIP 110041 / 391-98 / NVH 391-98)).